The sequence spans 152 residues: MSQVTEQSVRFQTALASIKLIQASAVLDLTEDDFDFLTSNKVWIATDRSRARRCVEACVYGTLDFVGYPRFPAPVEFIAAVIAYYVHPVNIQTACLIMEGAEFTENIINGVERPVKAAELFAFTLRVRAGNTDVLTDAEENVRQKLRAEGVM.

This sequence belongs to the microvirus D protein family. Component of the procapsid particle composed of 60 copies of the internally located B, 240 copies of the external scaffolding protein D, 60 copies of each of the viral structural proteins F and G, and 12 copies of protein H.

It is found in the host cytoplasm. In terms of biological role, assembles the procapsid by joining twelve 12S pre-assembly complex into a T=1 icosahedral particle, called 108S procapsid. Ten proteins D bind each 12S complex, which are formed by three pentamers of F, G, B protein and a H protein. The scaffolding protein is released from the provirion after genome packaging to form the mature virion. This chain is External scaffolding protein D (D), found in Escherichia coli C (Isolate Sanger).